Consider the following 978-residue polypeptide: Mast/stem cell growth factor receptor Kit (978 aa).

Residues 1 to 25 (MRGARGAWDFLFVLLLLLLVQTGSS) form the signal peptide. Residues 26 to 525 (QPSVSPGELS…QIHAHTLFTP (500 aa)) are Extracellular-facing. 5 consecutive Ig-like C2-type domains span residues 27–112 (PSVS…VFVR), 121–205 (DLPL…LKVR), 212–309 (PVVS…LEVV), 318–411 (PMMN…VNVN), and 414–508 (PEIL…FNFA). A disulfide bond links Cys58 and Cys97. N-linked (GlcNAc...) asparagine glycans are attached at residues Asn94, Asn130, and Asn145. Cystine bridges form between Cys136/Cys186, Cys151/Cys183, and Cys233/Cys291. Asn284, Asn294, Asn301, Asn321, Asn353, Asn368, Asn401, Asn464, and Asn487 each carry an N-linked (GlcNAc...) asparagine glycan. Cys429 and Cys492 are oxidised to a cystine. A helical transmembrane segment spans residues 526–546 (LLIGFVIAAGLMCIFVMILTY). The Cytoplasmic segment spans residues 547–978 (KYLQKPMYEV…TQPLLVHEDV (432 aa)). Phosphotyrosine occurs at positions 548 and 554. Tyr569 is a Mg(2+) binding site. Phosphotyrosine; by autocatalysis is present on residues Tyr569 and Tyr571. Residues 569–571 (YVY) form an important for interaction with phosphotyrosine-binding proteins region. One can recognise a Protein kinase domain in the interval 590 to 939 (LSFGKTLGAG…ISESTNHIYS (350 aa)). Residues 597–604 (GAGAFGKV), Lys624, and 672–678 (EYCCYGD) contribute to the ATP site. A phosphotyrosine; by autocatalysis mark is found at Tyr704 and Tyr722. Tyr731 carries the phosphotyrosine modification. 2 positions are modified to phosphoserine; by PKC/PRKCA: Ser743 and Ser748. Asp794 functions as the Proton acceptor in the catalytic mechanism. An ATP-binding site is contributed by Arg798. Mg(2+)-binding residues include Asn799 and Asp812. Ser823 bears the Phosphoserine mark. Tyr825 is subject to Phosphotyrosine; by autocatalysis. At Ser893 the chain carries Phosphoserine. At Tyr902 the chain carries Phosphotyrosine. Tyr938 is modified (phosphotyrosine; by autocatalysis). Ser961 is modified (phosphoserine).

The protein belongs to the protein kinase superfamily. Tyr protein kinase family. CSF-1/PDGF receptor subfamily. In terms of assembly, monomer in the absence of bound KITLG/SCF. Homodimer in the presence of bound KITLG/SCF, forming a heterotetramer with two KITLG/SCF molecules. Interacts (via phosphorylated tyrosine residues) with the adapter proteins GRB2 and GRB7 (via SH2 domain), and SH2B2/APS. Interacts (via C-terminus) with MPDZ (via the tenth PDZ domain). Interacts (via phosphorylated tyrosine residues) with PIK3R1 and PIK3CD. Interacts (via phosphorylated tyrosine) with CRK (isoform Crk-II), FYN, SHC1 and MATK/CHK (via SH2 domain). Interacts with LYN and FES/FPS. Interacts (via phosphorylated tyrosine residues) with the protein phosphatases PTPN6/SHP-1 (via SH2 domain), PTPN11/SHP-2 (via SH2 domain) and PTPRU. Interacts with PLCG1. Interacts with DOK1 and TEC. Interacts with IL1RAP (independent of stimulation with KITLG/SCF). A mast cell-specific KITLG/SCF-induced interleukin-33 signaling complex contains IL1RL1, IL1RAP, KIT and MYD88. Ubiquitinated by SOCS6. KIT is rapidly ubiquitinated after autophosphorylation induced by KITLG/SCF binding, leading to internalization and degradation. In terms of processing, autophosphorylated on tyrosine residues. KITLG/SCF binding promotes autophosphorylation. Phosphorylated tyrosine residues are important for interaction with specific binding partners.

The protein resides in the cell membrane. The enzyme catalyses L-tyrosyl-[protein] + ATP = O-phospho-L-tyrosyl-[protein] + ADP + H(+). Present in an inactive conformation in the absence of bound ligand. KITLG/SCF binding leads to dimerization and activation by autophosphorylation on tyrosine residues. Activity is down-regulated by PRKCA-mediated phosphorylation on serine residues. Its function is as follows. Tyrosine-protein kinase that acts as a cell-surface receptor for the cytokine KITLG/SCF and plays an essential role in the regulation of cell survival and proliferation, hematopoiesis, stem cell maintenance, gametogenesis, mast cell development, migration and function, and in melanogenesis. In response to KITLG/SCF binding, KIT can activate several signaling pathways. Phosphorylates PIK3R1, PLCG1, SH2B2/APS and CBL. Activates the AKT1 signaling pathway by phosphorylation of PIK3R1, the regulatory subunit of phosphatidylinositol 3-kinase. Activated KIT also transmits signals via GRB2 and activation of RAS, RAF1 and the MAP kinases MAPK1/ERK2 and/or MAPK3/ERK1. Promotes activation of STAT family members STAT1, STAT3, STAT5A and STAT5B. Activation of PLCG1 leads to the production of the cellular signaling molecules diacylglycerol and inositol 1,4,5-trisphosphate. KIT signaling is modulated by protein phosphatases, and by rapid internalization and degradation of the receptor. Activated KIT promotes phosphorylation of the protein phosphatases PTPN6/SHP-1 and PTPRU, and of the transcription factors STAT1, STAT3, STAT5A and STAT5B. Promotes phosphorylation of PIK3R1, CBL, CRK (isoform Crk-II), LYN, MAPK1/ERK2 and/or MAPK3/ERK1, PLCG1, SRC and SHC1. The sequence is that of Mast/stem cell growth factor receptor Kit (KIT) from Capra hircus (Goat).